A 336-amino-acid chain; its full sequence is Transcription initiation factor IIB (336 aa).

Residues 41–72 (QKLRCPICGNTVFIEDAERGQIVCASCGYVLM) form a TFIIB-type zinc finger. The Zn(2+) site is built by Cys-45, Cys-48, Cys-64, and Cys-67. Tandem repeats lie at residues 152–235 (HELN…AREL) and 246–327 (QYVP…ELAK).

Belongs to the TFIIB family.

In terms of biological role, stabilizes TBP binding to an archaeal box-A promoter. Also responsible for recruiting RNA polymerase II to the pre-initiation complex (DNA-TBP-TFIIB). This Caldivirga maquilingensis (strain ATCC 700844 / DSM 13496 / JCM 10307 / IC-167) protein is Transcription initiation factor IIB.